The primary structure comprises 179 residues: Large ribosomal subunit protein uL5 (179 aa).

The protein belongs to the universal ribosomal protein uL5 family. Part of the 50S ribosomal subunit; part of the 5S rRNA/L5/L18/L25 subcomplex. Contacts the 5S rRNA and the P site tRNA. Forms a bridge to the 30S subunit in the 70S ribosome.

Functionally, this is one of the proteins that bind and probably mediate the attachment of the 5S RNA into the large ribosomal subunit, where it forms part of the central protuberance. In the 70S ribosome it contacts protein S13 of the 30S subunit (bridge B1b), connecting the 2 subunits; this bridge is implicated in subunit movement. Contacts the P site tRNA; the 5S rRNA and some of its associated proteins might help stabilize positioning of ribosome-bound tRNAs. In Geotalea uraniireducens (strain Rf4) (Geobacter uraniireducens), this protein is Large ribosomal subunit protein uL5.